Reading from the N-terminus, the 293-residue chain is 33 kDa chaperonin (293 aa).

Cystine bridges form between Cys230-Cys232 and Cys263-Cys266.

Belongs to the HSP33 family. Under oxidizing conditions two disulfide bonds are formed involving the reactive cysteines. Under reducing conditions zinc is bound to the reactive cysteines and the protein is inactive.

The protein resides in the cytoplasm. Its function is as follows. Redox regulated molecular chaperone. Protects both thermally unfolding and oxidatively damaged proteins from irreversible aggregation. Plays an important role in the bacterial defense system toward oxidative stress. This chain is 33 kDa chaperonin, found in Edwardsiella ictaluri (strain 93-146).